We begin with the raw amino-acid sequence, 101 residues long: Urease subunit beta (101 aa).

Belongs to the urease beta subunit family. Heterotrimer of UreA (gamma), UreB (beta) and UreC (alpha) subunits. Three heterotrimers associate to form the active enzyme.

The protein localises to the cytoplasm. The enzyme catalyses urea + 2 H2O + H(+) = hydrogencarbonate + 2 NH4(+). The protein operates within nitrogen metabolism; urea degradation; CO(2) and NH(3) from urea (urease route): step 1/1. The sequence is that of Urease subunit beta from Rhizobium meliloti (strain 1021) (Ensifer meliloti).